We begin with the raw amino-acid sequence, 336 residues long: Holliday junction branch migration complex subunit RuvB (336 aa).

Residues 4–184 (ADRLISADAI…FGIVQRLEFY (181 aa)) are large ATPase domain (RuvB-L). ATP is bound by residues Arg24, Gly65, Lys68, Thr69, Thr70, 131 to 133 (EDY), Arg174, Tyr184, and Arg221. Position 69 (Thr69) interacts with Mg(2+). Positions 185-255 (NVADLQYIVG…VATQALDMLA (71 aa)) are small ATPAse domain (RuvB-S). The interval 258–336 (TEGFDYMDRK…HFGLTREDLG (79 aa)) is head domain (RuvB-H). Arg294, Arg313, and Arg318 together coordinate DNA.

The protein belongs to the RuvB family. Homohexamer. Forms an RuvA(8)-RuvB(12)-Holliday junction (HJ) complex. HJ DNA is sandwiched between 2 RuvA tetramers; dsDNA enters through RuvA and exits via RuvB. An RuvB hexamer assembles on each DNA strand where it exits the tetramer. Each RuvB hexamer is contacted by two RuvA subunits (via domain III) on 2 adjacent RuvB subunits; this complex drives branch migration. In the full resolvosome a probable DNA-RuvA(4)-RuvB(12)-RuvC(2) complex forms which resolves the HJ.

It is found in the cytoplasm. The catalysed reaction is ATP + H2O = ADP + phosphate + H(+). In terms of biological role, the RuvA-RuvB-RuvC complex processes Holliday junction (HJ) DNA during genetic recombination and DNA repair, while the RuvA-RuvB complex plays an important role in the rescue of blocked DNA replication forks via replication fork reversal (RFR). RuvA specifically binds to HJ cruciform DNA, conferring on it an open structure. The RuvB hexamer acts as an ATP-dependent pump, pulling dsDNA into and through the RuvAB complex. RuvB forms 2 homohexamers on either side of HJ DNA bound by 1 or 2 RuvA tetramers; 4 subunits per hexamer contact DNA at a time. Coordinated motions by a converter formed by DNA-disengaged RuvB subunits stimulates ATP hydrolysis and nucleotide exchange. Immobilization of the converter enables RuvB to convert the ATP-contained energy into a lever motion, pulling 2 nucleotides of DNA out of the RuvA tetramer per ATP hydrolyzed, thus driving DNA branch migration. The RuvB motors rotate together with the DNA substrate, which together with the progressing nucleotide cycle form the mechanistic basis for DNA recombination by continuous HJ branch migration. Branch migration allows RuvC to scan DNA until it finds its consensus sequence, where it cleaves and resolves cruciform DNA. This chain is Holliday junction branch migration complex subunit RuvB, found in Pectobacterium carotovorum subsp. carotovorum (strain PC1).